A 437-amino-acid polypeptide reads, in one-letter code: Elongation factor 1-gamma (437 aa).

Ala-2 is modified (N-acetylalanine). The region spanning 2-87 (AAGTLYTYPE…YVSNEELRGS (86 aa)) is the GST N-terminal domain. One can recognise a GST C-terminal domain in the interval 88–216 (TPEAAAQVVQ…VKLCEKMAQF (129 aa)). 2 positions are modified to N6-acetyllysine: Lys-147 and Lys-212. Positions 221–254 (FAESQPKKDTPRKEKGSREEKQKPQAERKEEKKA) are enriched in basic and acidic residues. The tract at residues 221–268 (FAESQPKKDTPRKEKGSREEKQKPQAERKEEKKAAAPAPEEEMDECEQ) is disordered. Lys-253 is covalently cross-linked (Glycyl lysine isopeptide (Lys-Gly) (interchain with G-Cter in SUMO1)). Residues 276-437 (AKDPFAHLPK…KAVNQGKIFK (162 aa)) form the EF-1-gamma C-terminal domain. Residue Lys-285 forms a Glycyl lysine isopeptide (Lys-Gly) (interchain with G-Cter in SUMO2) linkage. Lys-401 bears the N6-acetyllysine mark. Position 434 is an N6-acetyllysine; alternate (Lys-434). Lys-434 is modified (N6-malonyllysine; alternate).

As to quaternary structure, EF-1 is composed of four subunits: alpha, beta, delta, and gamma.

Its function is as follows. Probably plays a role in anchoring the complex to other cellular components. The protein is Elongation factor 1-gamma (Eef1g) of Mus musculus (Mouse).